Reading from the N-terminus, the 66-residue chain is UPF0337 protein BP1738 (66 aa).

The protein belongs to the UPF0337 (CsbD) family.

In Bordetella pertussis (strain Tohama I / ATCC BAA-589 / NCTC 13251), this protein is UPF0337 protein BP1738.